Consider the following 391-residue polypeptide: 1-deoxy-D-xylulose 5-phosphate reductoisomerase (391 aa).

Positions 17, 18, 19, 20, 47, and 130 each coordinate NADPH. Residue lysine 131 coordinates 1-deoxy-D-xylulose 5-phosphate. Glutamate 132 is a binding site for NADPH. Aspartate 156 contributes to the Mn(2+) binding site. 1-deoxy-D-xylulose 5-phosphate is bound by residues serine 157, glutamate 158, serine 182, and histidine 205. Glutamate 158 is a binding site for Mn(2+). An NADPH-binding site is contributed by glycine 211. 1-deoxy-D-xylulose 5-phosphate-binding residues include serine 218, asparagine 223, lysine 224, and glutamate 227. Mn(2+) is bound at residue glutamate 227.

It belongs to the DXR family. Mg(2+) is required as a cofactor. It depends on Mn(2+) as a cofactor.

The catalysed reaction is 2-C-methyl-D-erythritol 4-phosphate + NADP(+) = 1-deoxy-D-xylulose 5-phosphate + NADPH + H(+). It functions in the pathway isoprenoid biosynthesis; isopentenyl diphosphate biosynthesis via DXP pathway; isopentenyl diphosphate from 1-deoxy-D-xylulose 5-phosphate: step 1/6. Its function is as follows. Catalyzes the NADPH-dependent rearrangement and reduction of 1-deoxy-D-xylulose-5-phosphate (DXP) to 2-C-methyl-D-erythritol 4-phosphate (MEP). This is 1-deoxy-D-xylulose 5-phosphate reductoisomerase from Rhizobium meliloti (strain 1021) (Ensifer meliloti).